A 350-amino-acid chain; its full sequence is Protein RecA (350 aa).

An ATP-binding site is contributed by 65–72; sequence GPESSGKT. The tract at residues 326 to 350 is disordered; the sequence is HNLKTRNTADSKVTGAKDEKSKEEK. A compositionally biased stretch (basic and acidic residues) spans 340 to 350; sequence GAKDEKSKEEK.

Belongs to the RecA family.

The protein localises to the cytoplasm. Can catalyze the hydrolysis of ATP in the presence of single-stranded DNA, the ATP-dependent uptake of single-stranded DNA by duplex DNA, and the ATP-dependent hybridization of homologous single-stranded DNAs. It interacts with LexA causing its activation and leading to its autocatalytic cleavage. The protein is Protein RecA of Clostridium novyi (strain NT).